A 235-amino-acid chain; its full sequence is MGSTESSEGRRVSFGVDEEERVRVLQGVRLSENVVNRMKEPSSPPPAPTSSTFGLQDGNLRAPHKESTLPRSGSSGGQQPSGMKEGVKRYEQEHAAIQDKLFQVAKREREAATKHSKASLPTGEGSISHEEQKSVRLARELESREAELRRRDTFYKEQLERIERKNAEMYKLSSEQFHEAASKMESTIKPRRVEPVCSGLQAQILHCYRDRPHEVLLCSDLVKAYQRCVSAAHKG.

G2 carries the N-myristoyl glycine lipid modification. Phosphoserine occurs at positions 13 and 31. Disordered stretches follow at residues 31–90 (SENV…VKRY) and 106–132 (KREREAATKHSKASLPTGEGSISHEEQ). Residues 129–176 (HEEQKSVRLARELESREAELRRRDTFYKEQLERIERKNAEMYKLSSEQ) adopt a coiled-coil conformation. The CHCH domain maps to 194–235 (EPVCSGLQAQILHCYRDRPHEVLLCSDLVKAYQRCVSAAHKG). Short sequence motifs (cx9C motif) lie at residues 197–207 (CSGLQAQILHC) and 218–228 (CSDLVKAYQRC). Cystine bridges form between C197–C228 and C207–C218.

The protein belongs to the MICOS complex subunit Mic19 family. Metazoan Mic25 subfamily. In terms of assembly, component of the mitochondrial contact site and cristae organizing system (MICOS) complex, composed of at least MICOS10/MIC10, CHCHD3/MIC19, CHCHD6/MIC25, APOOL/MIC27, IMMT/MIC60, APOO/MIC23/MIC26 and MICOS13/MIC13. This complex was also known under the names MINOS or MitOS complex. The MICOS complex associates with mitochondrial outer membrane proteins SAMM50, MTX1 and MTX2 (together described as components of the mitochondrial outer membrane sorting assembly machinery (SAM) complex) and DNAJC11, mitochondrial inner membrane protein TMEM11 and with HSPA9. The MICOS and SAM complexes together with DNAJC11 are part of a large protein complex spanning both membranes termed the mitochondrial intermembrane space bridging (MIB) complex. Interacts with DISC1. Interacts with DISC1. Interacts with IMMT/MIC60. As to quaternary structure, (Microbial infection) Interacts with human cytomegalovirus protein UL37 isoform vMIA; this interaction rewires mitochondria by engaging the conserved MICOS complex.

Its subcellular location is the mitochondrion inner membrane. The protein localises to the mitochondrion. Functionally, component of the MICOS complex, a large protein complex of the mitochondrial inner membrane that plays crucial roles in the maintenance of crista junctions, inner membrane architecture, and formation of contact sites to the outer membrane. The polypeptide is MICOS complex subunit MIC25 (CHCHD6) (Homo sapiens (Human)).